Reading from the N-terminus, the 156-residue chain is Small ribosomal subunit protein uS7 (156 aa).

This sequence belongs to the universal ribosomal protein uS7 family. As to quaternary structure, part of the 30S ribosomal subunit. Contacts proteins S9 and S11.

Functionally, one of the primary rRNA binding proteins, it binds directly to 16S rRNA where it nucleates assembly of the head domain of the 30S subunit. Is located at the subunit interface close to the decoding center, probably blocks exit of the E-site tRNA. The sequence is that of Small ribosomal subunit protein uS7 from Agrobacterium fabrum (strain C58 / ATCC 33970) (Agrobacterium tumefaciens (strain C58)).